Here is a 125-residue protein sequence, read N- to C-terminus: Small ribosomal subunit protein uS13 (125 aa).

The segment at 92–125 is disordered; sequence RRSLPVRGQRTQTNARTRKGKRKTVAGKKKATKK. Over residues 107–125 the composition is skewed to basic residues; the sequence is RTRKGKRKTVAGKKKATKK.

This sequence belongs to the universal ribosomal protein uS13 family. In terms of assembly, part of the 30S ribosomal subunit. Forms a loose heterodimer with protein S19. Forms two bridges to the 50S subunit in the 70S ribosome.

Located at the top of the head of the 30S subunit, it contacts several helices of the 16S rRNA. In the 70S ribosome it contacts the 23S rRNA (bridge B1a) and protein L5 of the 50S subunit (bridge B1b), connecting the 2 subunits; these bridges are implicated in subunit movement. Contacts the tRNAs in the A and P-sites. The chain is Small ribosomal subunit protein uS13 from Chlorobium phaeobacteroides (strain DSM 266 / SMG 266 / 2430).